The sequence spans 232 residues: Small ribosomal subunit protein uS3 (232 aa).

In terms of domain architecture, KH type-2 spans 39–107; that stretch reads VRQFLIKELA…PAQINIAEVR (69 aa).

The protein belongs to the universal ribosomal protein uS3 family. Part of the 30S ribosomal subunit. Forms a tight complex with proteins S10 and S14.

In terms of biological role, binds the lower part of the 30S subunit head. Binds mRNA in the 70S ribosome, positioning it for translation. In Serratia proteamaculans (strain 568), this protein is Small ribosomal subunit protein uS3.